A 576-amino-acid chain; its full sequence is Proline--tRNA ligase (576 aa).

The protein belongs to the class-II aminoacyl-tRNA synthetase family. ProS type 1 subfamily. As to quaternary structure, homodimer.

It localises to the cytoplasm. It carries out the reaction tRNA(Pro) + L-proline + ATP = L-prolyl-tRNA(Pro) + AMP + diphosphate. Catalyzes the attachment of proline to tRNA(Pro) in a two-step reaction: proline is first activated by ATP to form Pro-AMP and then transferred to the acceptor end of tRNA(Pro). As ProRS can inadvertently accommodate and process non-cognate amino acids such as alanine and cysteine, to avoid such errors it has two additional distinct editing activities against alanine. One activity is designated as 'pretransfer' editing and involves the tRNA(Pro)-independent hydrolysis of activated Ala-AMP. The other activity is designated 'posttransfer' editing and involves deacylation of mischarged Ala-tRNA(Pro). The misacylated Cys-tRNA(Pro) is not edited by ProRS. The chain is Proline--tRNA ligase from Bordetella parapertussis (strain 12822 / ATCC BAA-587 / NCTC 13253).